We begin with the raw amino-acid sequence, 368 residues long: Glutamate 5-kinase (368 aa).

Lys-15 lines the ATP pocket. Residues Ser-55, Asp-143, and Asn-155 each coordinate substrate. Residues 175–176 (SD) and 217–223 (SGGMVSK) each bind ATP. The 78-residue stretch at 277-354 (EGRLTIDAGA…DAQEAALGYA (78 aa)) folds into the PUA domain.

It belongs to the glutamate 5-kinase family.

It localises to the cytoplasm. The catalysed reaction is L-glutamate + ATP = L-glutamyl 5-phosphate + ADP. The protein operates within amino-acid biosynthesis; L-proline biosynthesis; L-glutamate 5-semialdehyde from L-glutamate: step 1/2. Catalyzes the transfer of a phosphate group to glutamate to form L-glutamate 5-phosphate. The protein is Glutamate 5-kinase of Sphingopyxis alaskensis (strain DSM 13593 / LMG 18877 / RB2256) (Sphingomonas alaskensis).